A 238-amino-acid polypeptide reads, in one-letter code: Large ribosomal subunit protein uL1 (238 aa).

The protein belongs to the universal ribosomal protein uL1 family. In terms of assembly, part of the 50S ribosomal subunit.

Functionally, binds directly to 23S rRNA. The L1 stalk is quite mobile in the ribosome, and is involved in E site tRNA release. Protein L1 is also a translational repressor protein, it controls the translation of the L11 operon by binding to its mRNA. This Salinispora tropica (strain ATCC BAA-916 / DSM 44818 / JCM 13857 / NBRC 105044 / CNB-440) protein is Large ribosomal subunit protein uL1.